We begin with the raw amino-acid sequence, 949 residues long: Protein translocase subunit SecA 1 (949 aa).

ATP-binding positions include Gln86, 104–108, and Asp493; that span reads GEGKT. The interval 869–949 is disordered; that stretch reads VDGGARERAP…AKPPKSVKKR (81 aa). Basic and acidic residues predominate over residues 925 to 934; that stretch reads SRRERREAAR.

This sequence belongs to the SecA family. In terms of assembly, monomer and homodimer. Part of the essential Sec protein translocation apparatus which comprises SecA, SecYEG and auxiliary proteins SecDF. Other proteins may also be involved.

It localises to the cell membrane. The protein localises to the cytoplasm. The catalysed reaction is ATP + H2O + cellular proteinSide 1 = ADP + phosphate + cellular proteinSide 2.. Part of the Sec protein translocase complex. Interacts with the SecYEG preprotein conducting channel. Has a central role in coupling the hydrolysis of ATP to the transfer of proteins into and across the cell membrane, serving as an ATP-driven molecular motor driving the stepwise translocation of polypeptide chains across the membrane. This Mycobacterium bovis (strain ATCC BAA-935 / AF2122/97) protein is Protein translocase subunit SecA 1.